Consider the following 861-residue polypeptide: Probable beta-glucosidase A (861 aa).

An N-terminal signal peptide occupies residues 1–19 (MKLSILEAAALTAASVASA). N-linked (GlcNAc...) asparagine glycans are attached at residues Asn62, Asn212, and Asn253. Asp281 is a catalytic residue. Asn316, Asn323, Asn355, Asn524, Asn543, Asn565, Asn669, and Asn713 each carry an N-linked (GlcNAc...) asparagine glycan. Residues 735–754 (PEGATDGSPQPRLPASGGPG) form a disordered region.

This sequence belongs to the glycosyl hydrolase 3 family.

The protein resides in the secreted. The enzyme catalyses Hydrolysis of terminal, non-reducing beta-D-glucosyl residues with release of beta-D-glucose.. It functions in the pathway glycan metabolism; cellulose degradation. Its function is as follows. Beta-glucosidases are one of a number of cellulolytic enzymes involved in the degradation of cellulosic biomass. Catalyzes the last step releasing glucose from the inhibitory cellobiose. This chain is Probable beta-glucosidase A (bglA), found in Aspergillus terreus.